Here is a 1127-residue protein sequence, read N- to C-terminus: E3 ubiquitin-protein ligase TRIM33 (1127 aa).

Residues Met1–Gly18 are compositionally biased toward gly residues. Residues Met1–Pro118 are disordered. The tract at residues Met1–His147 is necessary for E3 ubiquitin-protein ligase activity and repression of SMAD4 signaling and transcriptional repression. The segment covering Ser19–Pro37 has biased composition (low complexity). Over residues Arg52–Asp64 the composition is skewed to gly residues. Residues Gly65–Pro97 are compositionally biased toward low complexity. Residues Ala98 to Pro118 are compositionally biased toward pro residues. An RING-type zinc finger spans residues Cys125–Leu154. 2 consecutive B box-type zinc fingers follow at residues Lys212–Lys259 and Gln271–Leu312. Residues Cys217, Cys220, Cys241, His245, Cys276, His279, Cys299, and His304 each contribute to the Zn(2+) site. A necessary for oligomerization region spans residues Cys299 to Asp401. A coiled-coil region spans residues Cys299–Asp401. Residues Lys329, Lys334, Lys481, and Lys504 each participate in a glycyl lysine isopeptide (Lys-Gly) (interchain with G-Cter in SUMO2) cross-link. An Asymmetric dimethylarginine; alternate modification is found at Arg515. Position 515 is an omega-N-methylarginine; alternate (Arg515). Lys527 is covalently cross-linked (Glycyl lysine isopeptide (Lys-Gly) (interchain with G-Cter in SUMO2)). Position 535 is an omega-N-methylarginine (Arg535). Residues Met536–Gln563 are disordered. At Arg577 the chain carries Asymmetric dimethylarginine. Residue Arg591 is modified to Asymmetric dimethylarginine; alternate. The residue at position 591 (Arg591) is an Omega-N-methylarginine; alternate. Arg598 and Arg604 each carry asymmetric dimethylarginine. Disordered regions lie at residues Pro608–Pro629, Asn673–Gly692, and Tyr703–Leu818. Positions Pro723 to Arg759 are enriched in low complexity. An N6-acetyllysine; alternate mark is found at Lys763 and Lys769. Residues Lys763 and Lys769 each participate in a glycyl lysine isopeptide (Lys-Gly) (interchain with G-Cter in SUMO2); alternate cross-link. Lys774 participates in a covalent cross-link: Glycyl lysine isopeptide (Lys-Gly) (interchain with G-Cter in SUMO2). Residues Lys776 and Lys793 each participate in a glycyl lysine isopeptide (Lys-Gly) (interchain with G-Cter in SUMO2); alternate cross-link. Residues Lys776 and Lys793 each participate in a glycyl lysine isopeptide (Lys-Gly) (interchain with G-Cter in SUMO1); alternate cross-link. Lys793 is modified (N6-acetyllysine; alternate). Positions Lys793 to Arg802 are enriched in basic and acidic residues. Residue Lys796 forms a Glycyl lysine isopeptide (Lys-Gly) (interchain with G-Cter in SUMO2) linkage. The residue at position 803 (Ser803) is a Phosphoserine. Low complexity predominate over residues Leu807–Leu818. At Thr815 the chain carries Phosphothreonine. Lys861 participates in a covalent cross-link: Glycyl lysine isopeptide (Lys-Gly) (interchain with G-Cter in SUMO2). Ser862 is subject to Phosphoserine. The PHD-type zinc-finger motif lies at Glu887–Ile934. Lys951 carries the N6-acetyllysine modification. Lys953 carries the N6-acetyllysine; alternate modification. A Glycyl lysine isopeptide (Lys-Gly) (interchain with G-Cter in SUMO2); alternate cross-link involves residue Lys953. In terms of domain architecture, Bromo spans Gly957–Ile1080. Residues Lys1007 and Lys1043 each participate in a glycyl lysine isopeptide (Lys-Gly) (interchain with G-Cter in SUMO2) cross-link. Thr1051 carries the post-translational modification Phosphothreonine. Residue Lys1057 forms a Glycyl lysine isopeptide (Lys-Gly) (interchain with G-Cter in SUMO2) linkage. The segment at Pro1088–Lys1127 is disordered. Residues Phe1092–Phe1109 are compositionally biased toward acidic residues. Thr1102 carries the post-translational modification Phosphothreonine. Ser1105 carries the phosphoserine modification. Residue Lys1118 forms a Glycyl lysine isopeptide (Lys-Gly) (interchain with G-Cter in SUMO2) linkage. The span at Lys1118–Lys1127 shows a compositional bias: basic and acidic residues. The residue at position 1119 (Ser1119) is a Phosphoserine.

This sequence belongs to the TRIM/RBCC family. In terms of assembly, homooligomer and heterooligomer with TRIM24 and TRIM28 family members. Interacts with SMAD4 in unstimulated cells. Found in a complex with SMAD2 and SMAD3 upon addition of TGF-beta. Interacts with SMAD2 and SMAD3. Interacts with SMAD4 under basal and induced conditions and, upon TGF-beta signaling, with activated SMAD2. Forms a ternary complex with SMAD4 and SMAD2 upon TGF-beta signaling. In terms of processing, sumoylated with SUMO1. As to expression, expressed in stem cells at the bottom of the crypts of the colon (at protein level). Expressed in colon adenomas and adenocarcinomas (at protein level). Expressed in brain, lung, liver, spleen, thymus, prostate, kidney, testis, heart, placenta, pancreas, small intestine, ovary, colon, skeletal muscle and hematopoietic progenitors.

It localises to the nucleus. The catalysed reaction is S-ubiquitinyl-[E2 ubiquitin-conjugating enzyme]-L-cysteine + [acceptor protein]-L-lysine = [E2 ubiquitin-conjugating enzyme]-L-cysteine + N(6)-ubiquitinyl-[acceptor protein]-L-lysine.. It functions in the pathway protein modification; protein ubiquitination. Acts as an E3 ubiquitin-protein ligase. Promotes SMAD4 ubiquitination, nuclear exclusion and degradation via the ubiquitin proteasome pathway. According to PubMed:16751102, does not promote a decrease in the level of endogenous SMAD4. May act as a transcriptional repressor. Inhibits the transcriptional response to TGF-beta/BMP signaling cascade. Plays a role in the control of cell proliferation. Its association with SMAD2 and SMAD3 stimulates erythroid differentiation of hematopoietic stem/progenitor. Monoubiquitinates SMAD4 and acts as an inhibitor of SMAD4-dependent TGF-beta/BMP signaling cascade (Monoubiquitination of SMAD4 hampers its ability to form a stable complex with activated SMAD2/3 resulting in inhibition of TGF-beta/BMP signaling cascade). This is E3 ubiquitin-protein ligase TRIM33 (TRIM33) from Homo sapiens (Human).